We begin with the raw amino-acid sequence, 317 residues long: Acetyl-coenzyme A carboxylase carboxyl transferase subunit alpha (317 aa).

A CoA carboxyltransferase C-terminal domain is found at 37–292; that stretch reads QISQKLEDTK…EEYILKAFNE (256 aa).

It belongs to the AccA family. As to quaternary structure, acetyl-CoA carboxylase is a heterohexamer composed of biotin carboxyl carrier protein (AccB), biotin carboxylase (AccC) and two subunits each of ACCase subunit alpha (AccA) and ACCase subunit beta (AccD).

It localises to the cytoplasm. It carries out the reaction N(6)-carboxybiotinyl-L-lysyl-[protein] + acetyl-CoA = N(6)-biotinyl-L-lysyl-[protein] + malonyl-CoA. It functions in the pathway lipid metabolism; malonyl-CoA biosynthesis; malonyl-CoA from acetyl-CoA: step 1/1. Functionally, component of the acetyl coenzyme A carboxylase (ACC) complex. First, biotin carboxylase catalyzes the carboxylation of biotin on its carrier protein (BCCP) and then the CO(2) group is transferred by the carboxyltransferase to acetyl-CoA to form malonyl-CoA. The polypeptide is Acetyl-coenzyme A carboxylase carboxyl transferase subunit alpha (Flavobacterium psychrophilum (strain ATCC 49511 / DSM 21280 / CIP 103535 / JIP02/86)).